A 308-amino-acid polypeptide reads, in one-letter code: Putative transposon Ty5-1 protein YCL074W (308 aa).

The chain is Putative transposon Ty5-1 protein YCL074W (TY5A) from Saccharomyces cerevisiae (strain ATCC 204508 / S288c) (Baker's yeast).